Consider the following 61-residue polypeptide: Large ribosomal subunit protein uL30 (61 aa).

The protein belongs to the universal ribosomal protein uL30 family. In terms of assembly, part of the 50S ribosomal subunit.

The protein is Large ribosomal subunit protein uL30 of Dichelobacter nodosus (strain VCS1703A).